Consider the following 768-residue polypeptide: DNA ligase 1 (768 aa).

The disordered stretch occupies residues 42-139 (VEVSQSSSDS…KEPPLESNAR (98 aa)). Residues 52–99 (KNVDGRSTSEKRKVESVKLVDESKHNNHDDTGTQNVERENNIVSEAKK) show a composition bias toward basic and acidic residues. Positions 104-124 (GSSSSSSDAVSSNNDSGASTP) are enriched in low complexity. The interval 309-318 (KLRLQLAEKT) is interaction with target DNA. E414 is a binding site for ATP. K416 acts as the N6-AMP-lysine intermediate in catalysis. ATP contacts are provided by R421 and R437. Residue E469 participates in Mg(2+) binding. The segment at 490-492 (KRK) is interaction with target DNA. E568 is a Mg(2+) binding site. 3 residues coordinate ATP: K573, R587, and K593.

This sequence belongs to the ATP-dependent DNA ligase family. Requires Mg(2+) as cofactor.

It localises to the nucleus. It catalyses the reaction ATP + (deoxyribonucleotide)n-3'-hydroxyl + 5'-phospho-(deoxyribonucleotide)m = (deoxyribonucleotide)n+m + AMP + diphosphate.. In terms of biological role, DNA ligase that seals nicks in double-stranded DNA during DNA replication, DNA recombination and DNA repair. This is DNA ligase 1 (cdc17) from Schizosaccharomyces pombe (strain 972 / ATCC 24843) (Fission yeast).